The following is a 484-amino-acid chain: Vanillin dehydrogenase (484 aa).

NADP(+) is bound by residues Trp156 to Asn157, Lys180 to Ser183, and Gly234 to Ser235. Residues Lys180 and Gly234–Gly239 each bind NAD(+). Glu258 serves as the catalytic Proton acceptor. NADP(+) is bound at residue Leu259. The active-site Nucleophile is the Cys292. Residues Gln339 and Glu386 each contribute to the NAD(+) site. Glu386 is an NADP(+) binding site.

The protein belongs to the aldehyde dehydrogenase family. As to quaternary structure, exists as a homodimer, homotrimer and homotetramer.

The catalysed reaction is vanillin + NAD(+) + H2O = vanillate + NADH + 2 H(+). It catalyses the reaction vanillin + NADP(+) + H2O = vanillate + NADPH + 2 H(+). It carries out the reaction 3,4-dihydroxybenzaldehyde + NAD(+) + H2O = 3,4-dihydroxybenzoate + NADH + 2 H(+). The enzyme catalyses 3,4-dihydroxybenzaldehyde + NADP(+) + H2O = 3,4-dihydroxybenzoate + NADPH + 2 H(+). The catalysed reaction is 4-hydroxybenzaldehyde + NAD(+) + H2O = 4-hydroxybenzoate + NADH + 2 H(+). It catalyses the reaction 4-hydroxybenzaldehyde + NADP(+) + H2O = 4-hydroxybenzoate + NADPH + 2 H(+). Catalyzes oxidation of vanillin to vanillate. Also oxidizes 3,4-dihydroxybenzaldehyde and 4-hydroxybenzaldehyde significantly. Other aromatic aldehyde substrates in the order of decreasing activity include 3-hydroxybenzaldehyde, 4-nitrobenzaldehyde, terephthalaldehyde, 2,4-dichlorobenzaldehyde, benzaldehyde and 3-phenylpropanal. Low activity with phthalaldehyde, cinnamaldehyde and syringaldehyde. No activity with phenylacetaldehyde, formaldehyde or aldehyde. Active with both NAD(+) and NADP(+). Involved in the degradation pathway of lignin-derived aromatic compounds of plant cell walls. Catalyzes the conversion of vanillin to vanillate due to toxicity of vanillin to the cells. The protein is Vanillin dehydrogenase of Corynebacterium glutamicum (strain ATCC 13032 / DSM 20300 / JCM 1318 / BCRC 11384 / CCUG 27702 / LMG 3730 / NBRC 12168 / NCIMB 10025 / NRRL B-2784 / 534).